A 373-amino-acid polypeptide reads, in one-letter code: Chemerin-like receptor 1 (373 aa).

The Extracellular portion of the chain corresponds to 1 to 41 (MRMEDEDYNTSISYGDEYPDYLDSIVVLEDLSPLEARVTRI). Asn9 carries N-linked (GlcNAc...) asparagine glycosylation. A helical transmembrane segment spans residues 42–64 (FLVVVYSIVCFLGILGNGLVIII). Residues 65 to 75 (ATFKMKKTVNM) are Cytoplasmic-facing. A helical transmembrane segment spans residues 76–97 (VWFLNLAVADFLFNVFLPIHIT). The Extracellular portion of the chain corresponds to 98 to 114 (YAAMDYHWVFGTAMCKI). Residues Cys112 and Cys189 are joined by a disulfide bond. Residues 115–135 (SNFLLIHNMFTSVFLLTIISS) traverse the membrane as a helical segment. The Cytoplasmic portion of the chain corresponds to 136–154 (DRCISVLLPVWSQNHRSVR). The chain crosses the membrane as a helical span at residues 155-176 (LAYMACMVIWVLAFFLSSPSLV). At 177-224 (FRDTANLHGKISCFNNFSLSTPGSSSWPTHSQMDPVGYSRHMVVTVTR) the chain is on the extracellular side. The N-linked (GlcNAc...) asparagine glycan is linked to Asn192. The chain crosses the membrane as a helical span at residues 225 to 245 (FLCGFLVPVLIITACYLTIVC). The Cytoplasmic segment spans residues 246–261 (KLQRNRLAKTKKPFKI). A helical transmembrane segment spans residues 262-282 (IVTIIITFFLCWCPYHTLNLL). Residues 283-300 (ELHHTAMPGSVFSLGLPL) are Extracellular-facing. The helical transmembrane segment at 301 to 320 (ATALAIANSCMNPILYVFMG) threads the bilayer. Over 321–373 (QDFKKFKVALFSRLVNALSEDTGHSSYPSHRSFTKMSSMNERTSMNERETGML) the chain is Cytoplasmic. Ser339 carries the post-translational modification Phosphoserine. Residues 341 to 373 (DTGHSSYPSHRSFTKMSSMNERTSMNERETGML) form a disordered region. Phosphothreonine is present on Thr342. The span at 344-363 (HSSYPSHRSFTKMSSMNERT) shows a compositional bias: polar residues. Phosphoserine is present on residues Ser349, Ser352, and Ser358. The segment covering 364-373 (SMNERETGML) has biased composition (basic and acidic residues).

It belongs to the chemokine-like receptor (CMKLR) family. Prominently expressed in developing osseous and cartilaginous tissue. Also found in adult parathyroid glands. Expressed in cardiovascular system, brain, kidney, gastrointestinal tissues and myeloid tissues. Expressed in a broad array of tissues associated with hematopoietic and immune function including, spleen, thymus, appendix, lymph node, bone marrow and fetal liver. Among leukocyte populations abundant expression in monocyte-derived macrophage and immature dendritic cells (DCs). High expression in blood monocytes and low levels in polymorphonuclear cells and T-cells. Expressed on endothelial cells. Highly expressed in differentiating adipocytes.

The protein localises to the cell membrane. Functionally, receptor for the chemoattractant adipokine chemerin/RARRES2 and for the omega-3 fatty acid derived molecule resolvin E1. Interaction with RARRES2 initiates activation of G proteins G(i)/G(o) and beta-arrestin pathways inducing cellular responses via second messenger pathways such as intracellular calcium mobilization, phosphorylation of MAP kinases MAPK1/MAPK3 (ERK1/2), TYRO3, MAPK14/P38MAPK and PI3K leading to multifunctional effects, like reduction of immune responses, enhancing of adipogenesis and angionesis. Resolvin E1 down-regulates cytokine production in macrophages by reducing the activation of MAPK1/3 (ERK1/2) and NF-kappa-B. Positively regulates adipogenesis and adipocyte metabolism. Its function is as follows. (Microbial infection) Acts as a coreceptor for several SIV strains (SIVMAC316, SIVMAC239, SIVMACL7E-FR and SIVSM62A), as well as a primary HIV-1 strain (92UG024-2). This chain is Chemerin-like receptor 1, found in Homo sapiens (Human).